The following is a 417-amino-acid chain: Frizzy aggregation protein FrzCD (417 aa).

Basic and acidic residues predominate over residues 1–11 (MSLDTPNEKPA). The tract at residues 1–34 (MSLDTPNEKPAGKARARKAPASKAGATNAASTSS) is disordered. Residues 21 to 34 (ASKAGATNAASTSS) show a composition bias toward low complexity. A Methyl-accepting transducer domain is found at 144-380 (AALRLSSSAN…QVVASMAEIE (237 aa)).

This sequence belongs to the methyl-accepting chemotaxis (MCP) protein family. In terms of processing, methylated. Saturated fatty acids capric acid and lauric acid stimulate methylation. Short-chain alcohols, such as isoamyl alcohol, and some other solvents cause demethylation.

The protein resides in the cytoplasm. Its function is as follows. Methyl-accepting taxis protein necessary for the proper aggregation of cells to form fruiting bodies. Frz genes define a system of signal transduction analogous to the enterobacterial chemotaxis systems. The sequence is that of Frizzy aggregation protein FrzCD (frzCD) from Myxococcus xanthus.